The following is a 170-amino-acid chain: Adenine phosphoribosyltransferase (170 aa).

It belongs to the purine/pyrimidine phosphoribosyltransferase family. As to quaternary structure, homodimer.

The protein resides in the cytoplasm. It carries out the reaction AMP + diphosphate = 5-phospho-alpha-D-ribose 1-diphosphate + adenine. It functions in the pathway purine metabolism; AMP biosynthesis via salvage pathway; AMP from adenine: step 1/1. Its function is as follows. Catalyzes a salvage reaction resulting in the formation of AMP, that is energically less costly than de novo synthesis. This Thermosipho africanus (strain TCF52B) protein is Adenine phosphoribosyltransferase.